The sequence spans 671 residues: Probable potassium transport system protein Kup 2 (671 aa).

Transmembrane regions (helical) follow at residues 18–38 (GFLI…LYAM), 60–80 (VSLV…LIAL), 103–123 (WLIV…ALTP), 149–169 (VTTL…ASLV), 173–193 (FGPI…INSF), 218–238 (AGFF…ALYS), 252–272 (WPFV…WLLA), 292–312 (MVIY…QALI), 343–363 (LYIP…VLYF), 373–393 (YSLA…YFLI), 402–422 (IAFI…ASLV), and 424–444 (FING…VMFI).

The protein belongs to the HAK/KUP transporter (TC 2.A.72) family.

The protein localises to the cell membrane. It catalyses the reaction K(+)(in) + H(+)(in) = K(+)(out) + H(+)(out). In terms of biological role, transport of potassium into the cell. Likely operates as a K(+):H(+) symporter. This is Probable potassium transport system protein Kup 2 from Lactococcus lactis subsp. cremoris (strain SK11).